A 153-amino-acid chain; its full sequence is Superoxide dismutase [Cu-Zn] (153 aa).

His-45 and His-47 together coordinate Cu cation. A Phosphothreonine modification is found at Thr-53. A disulfide bridge links Cys-56 with Cys-145. Ser-59 carries the phosphoserine modification. His-62 serves as a coordination point for Cu cation. Residues His-62, His-70, His-79, and Asp-82 each coordinate Zn(2+). His-119 contributes to the Cu cation binding site.

Belongs to the Cu-Zn superoxide dismutase family. In terms of assembly, homodimer. Cu cation serves as cofactor. It depends on Zn(2+) as a cofactor.

The protein localises to the cytoplasm. It carries out the reaction 2 superoxide + 2 H(+) = H2O2 + O2. Functionally, destroys radicals which are normally produced within the cells and which are toxic to biological systems. This Drosophila melanogaster (Fruit fly) protein is Superoxide dismutase [Cu-Zn].